A 1531-amino-acid chain; its full sequence is MGVCADLGSHRWCRALSTQHNTEKSKEQQQQSQPLEIPEQRASKCRGDIDRTTTTTIPASKTLTASPAKTAAFTVKTTRRRRSRRRAEGSSICVPIRRGQGSTPTPTIQVLQFVLVSLLALLAKNAQAHNIPEDAVHITAILGEGVIFNCHVEFPNDHPVPYVLQWDKKVSETGSDLPIYIWYESYPEHIEEGYKGRVSRVSQDSPFGSASLNLTNIRESDQGWYECKVVFLNRDPKQHKNGTWFHLDVHAPPRFSVTPEDIIYVNLGDSIILNCQADGTPTPEILWYKDANPVDPSPTVGIFNDGTELRISTIRHEDIGEYTCIARNGEGQVSHTARVIIAGGAVIMVPPTNQTKLEGEKVIFSCEAKAMPGNVTVRWYREGSPVREVAALETRVTIRKDGSLIINPIKPDDSGQYLCEVTNGIGDPQSASAYLSVEYPAKVTFTPTVQYLPFRLAGVVQCYIKSSPQLQYVTWTKDKRLLEPYQMKDIVVMANGSLLFTRVNEEHQGQYACTPYNAQGTAGASGVMDVLVRKPPAFTVEPETLYQRKVGDSVEMHCDALEAEGTERPTIKWQRQEGEQLTESQRNRIKISGGNITIENLRREDFGYYQCVVSNEVATLMAVTQLVIEGTQPHAPYNITGKATESSITLQWLPGYSGGSEYKQDYTIWFREAGVNDWQTISVTPSGSTQVTINGLASGTTYEFQVVGRNVLGDGMMSKVMTVRTLEDAPAAPRNVKAATQPPDSFFQLMPDEAGPKPGPPRNVSVTEVSNGFLITWQSPLERAHIVKFYTIKYRTDAQWKTLNRGQIRPEETQYLVKNLVGGRTYYFRVLANSEKSYESSDEVKFPVPARVKHKAITAGVVGGILFFIVAIILSVCAVKICNKRKRRKQEKEFNMVACRITDARNIAANNHHLHNRSTGSISSGQVPLKNNTEHYRDYESVFIVPGHPVIIKIVQTNPNIKSNRHSHCHLHWIWPPDRCTNCHSIYSSPNLEDGDEDDGGGGRRRSVSRIQRSLDGRFVLDVEGVSKLGYSQQTLESGNVDVVDGGLFERRNSNVSQKSSSDDGGFLSRRNFITARASWRRPLVASSSQLSLQSAADSARGFLQGLLKIGAKQSAVPPNSQSYFDEAVSGARYQNVLRPYTSSNNLYGNADRSRPLHINTISGSLSQQQQLYTPSRISRIFSSSPQQLQPHHQQLLLSSGGSGAYPTHFSDLSTVYPPNSAERSSHNLSSRYRYYSQELPSLRTIQEETRRQQQQKQHPLEDHFVPLQLPSPPSWRSYYQSQASYRPRTRWYPRHHSRLFSNRQQQHEMLSPLPQLNLNLRNSMNPGGLEASPESRSSSSGFGSKNTSNHPGSTSEWRLLPPYRAPPSPPKHSGYFGGQQAQGQTPHGSYSYPRATTPPYTMAHWLEMISRLNAATDSNLPKAPCPVDVGSVDGHYEFDPATPTPSASSMLREDLNLHIDTHPYHHHTLGPLSGSLLHSHAPYGGGARKQRSLPAHLPRYDNVEVRLQAMREEFYAYRKRQAMQQMESVC.

Residues 1-858 (MGVCADLGSH…PARVKHKAIT (858 aa)) are Extracellular-facing. The segment at 19 to 44 (QHNTEKSKEQQQQSQPLEIPEQRASK) is disordered. 5 Ig-like C2-type domains span residues 132–243 (PEDA…KNGT), 253–340 (PRFS…ARVI), 344–436 (GAVI…AYLS), 440–529 (PAKV…GVMD), and 536–624 (PAFT…MAVT). Disulfide bonds link C150/C227, C275/C324, C366/C419, C462/C513, and C558/C611. 2 consecutive Fibronectin type-III domains span residues 632–728 (QPHA…TLED) and 760–851 (PPRN…VPAR). The chain crosses the membrane as a helical span at residues 859 to 879 (AGVVGGILFFIVAIILSVCAV). The Cytoplasmic portion of the chain corresponds to 880 to 1531 (KICNKRKRRK…QAMQQMESVC (652 aa)). Disordered stretches follow at residues 1248–1269 (EETR…VPLQ) and 1318–1395 (NLNL…SYPR). Residues 1333-1349 (SPESRSSSSGFGSKNTS) are compositionally biased toward low complexity. Positions 1380 to 1389 (QQAQGQTPHG) are enriched in polar residues.

It belongs to the immunoglobulin superfamily. Turtle family. In terms of assembly, interacts with bdl. Exclusively expressed in the central nervous system.

It is found in the membrane. Its function is as follows. Essential protein that plays a role in the establishment of coordinated motor control. In the developing eye, involved in axonal targeting of the R7 photoreceptor. The protein is Protein turtle (tutl) of Drosophila melanogaster (Fruit fly).